The primary structure comprises 293 residues: Nucleotide-binding protein BC_5156 (293 aa).

14-21 (GMSGAGKT) serves as a coordination point for ATP. 65 to 68 (DLRG) is a binding site for GTP.

The protein belongs to the RapZ-like family.

In terms of biological role, displays ATPase and GTPase activities. This is Nucleotide-binding protein BC_5156 from Bacillus cereus (strain ATCC 14579 / DSM 31 / CCUG 7414 / JCM 2152 / NBRC 15305 / NCIMB 9373 / NCTC 2599 / NRRL B-3711).